The sequence spans 120 residues: UPF0295 protein Aflv_0370 (120 aa).

The next 2 membrane-spanning stretches (helical) occupy residues 12–32 (IRTFALSLIFIGFFVMYGGIF) and 42–62 (LFMILGLLFIIASTVVYFWIG).

The protein belongs to the UPF0295 family.

Its subcellular location is the cell membrane. The chain is UPF0295 protein Aflv_0370 from Anoxybacillus flavithermus (strain DSM 21510 / WK1).